The sequence spans 79 residues: DNA-directed RNA polymerase subunit omega (79 aa).

This sequence belongs to the RNA polymerase subunit omega family. In cyanobacteria the RNAP catalytic core is composed of 2 alpha, 1 beta, 1 beta', 1 gamma and 1 omega subunit. When a sigma factor is associated with the core the holoenzyme is formed, which can initiate transcription.

The catalysed reaction is RNA(n) + a ribonucleoside 5'-triphosphate = RNA(n+1) + diphosphate. Its function is as follows. Promotes RNA polymerase assembly. Latches the N- and C-terminal regions of the beta' subunit thereby facilitating its interaction with the beta and alpha subunits. In Synechococcus sp. (strain JA-2-3B'a(2-13)) (Cyanobacteria bacterium Yellowstone B-Prime), this protein is DNA-directed RNA polymerase subunit omega.